A 339-amino-acid chain; its full sequence is DNA-directed RNA polymerase subunit alpha (339 aa).

Residues 1-234 (MIEKNWQELI…DQFQIFINFE (234 aa)) form an alpha N-terminal domain (alpha-NTD) region. The interval 251–339 (FNPALLRKVD…DLAKRFEDHV (89 aa)) is alpha C-terminal domain (alpha-CTD).

It belongs to the RNA polymerase alpha chain family. As to quaternary structure, homodimer. The RNAP catalytic core consists of 2 alpha, 1 beta, 1 beta' and 1 omega subunit. When a sigma factor is associated with the core the holoenzyme is formed, which can initiate transcription.

It carries out the reaction RNA(n) + a ribonucleoside 5'-triphosphate = RNA(n+1) + diphosphate. Functionally, DNA-dependent RNA polymerase catalyzes the transcription of DNA into RNA using the four ribonucleoside triphosphates as substrates. The protein is DNA-directed RNA polymerase subunit alpha of Maricaulis maris (strain MCS10) (Caulobacter maris).